Reading from the N-terminus, the 279-residue chain is Tryptophan synthase alpha chain (279 aa).

Residues E50 and D61 each act as proton acceptor in the active site.

Belongs to the TrpA family. As to quaternary structure, tetramer of two alpha and two beta chains.

The enzyme catalyses (1S,2R)-1-C-(indol-3-yl)glycerol 3-phosphate + L-serine = D-glyceraldehyde 3-phosphate + L-tryptophan + H2O. The protein operates within amino-acid biosynthesis; L-tryptophan biosynthesis; L-tryptophan from chorismate: step 5/5. Functionally, the alpha subunit is responsible for the aldol cleavage of indoleglycerol phosphate to indole and glyceraldehyde 3-phosphate. The sequence is that of Tryptophan synthase alpha chain from Brucella melitensis biotype 1 (strain ATCC 23456 / CCUG 17765 / NCTC 10094 / 16M).